We begin with the raw amino-acid sequence, 305 residues long: D-alanine--D-alanine ligase (305 aa).

The ATP-grasp domain maps to 99-300 (KLFFEKAGIR…YEEMIQTFVN (202 aa)). 126–181 (NFTGTYPVVVKPNQEGSTIGLTVAETEEELLQGIEEAFRHDDTILIEEFIAGTEVT) is an ATP binding site.

It belongs to the D-alanine--D-alanine ligase family.

The protein localises to the cytoplasm. The enzyme catalyses 2 D-alanine + ATP = D-alanyl-D-alanine + ADP + phosphate + H(+). It participates in cell wall biogenesis; peptidoglycan biosynthesis. Its function is as follows. Cell wall formation. This chain is D-alanine--D-alanine ligase, found in Halalkalibacterium halodurans (strain ATCC BAA-125 / DSM 18197 / FERM 7344 / JCM 9153 / C-125) (Bacillus halodurans).